Here is a 274-residue protein sequence, read N- to C-terminus: Large ribosomal subunit protein uL2 (274 aa).

Residues 223–274 form a disordered region; that stretch reads VAMNPVDHPHGGGEGRTSGGRHPVSPWGMPTKGFKTRKNKSTDKYIVRRRNK.

It belongs to the universal ribosomal protein uL2 family. Part of the 50S ribosomal subunit. Forms a bridge to the 30S subunit in the 70S ribosome.

Its function is as follows. One of the primary rRNA binding proteins. Required for association of the 30S and 50S subunits to form the 70S ribosome, for tRNA binding and peptide bond formation. It has been suggested to have peptidyltransferase activity; this is somewhat controversial. Makes several contacts with the 16S rRNA in the 70S ribosome. The chain is Large ribosomal subunit protein uL2 from Aliivibrio salmonicida (strain LFI1238) (Vibrio salmonicida (strain LFI1238)).